We begin with the raw amino-acid sequence, 481 residues long: 3-isopropylmalate dehydratase large subunit (481 aa).

3 residues coordinate [4Fe-4S] cluster: C355, C415, and C418.

The protein belongs to the aconitase/IPM isomerase family. LeuC type 1 subfamily. Heterodimer of LeuC and LeuD. It depends on [4Fe-4S] cluster as a cofactor.

It carries out the reaction (2R,3S)-3-isopropylmalate = (2S)-2-isopropylmalate. It functions in the pathway amino-acid biosynthesis; L-leucine biosynthesis; L-leucine from 3-methyl-2-oxobutanoate: step 2/4. Catalyzes the isomerization between 2-isopropylmalate and 3-isopropylmalate, via the formation of 2-isopropylmaleate. The protein is 3-isopropylmalate dehydratase large subunit of Symbiobacterium thermophilum (strain DSM 24528 / JCM 14929 / IAM 14863 / T).